A 112-amino-acid chain; its full sequence is UPF0235 protein Atu2660 (112 aa).

It belongs to the UPF0235 family.

The chain is UPF0235 protein Atu2660 from Agrobacterium fabrum (strain C58 / ATCC 33970) (Agrobacterium tumefaciens (strain C58)).